Reading from the N-terminus, the 108-residue chain is Pyrimidine/purine nucleoside phosphorylase (108 aa).

It belongs to the nucleoside phosphorylase PpnP family.

It carries out the reaction a purine D-ribonucleoside + phosphate = a purine nucleobase + alpha-D-ribose 1-phosphate. The catalysed reaction is adenosine + phosphate = alpha-D-ribose 1-phosphate + adenine. It catalyses the reaction cytidine + phosphate = cytosine + alpha-D-ribose 1-phosphate. The enzyme catalyses guanosine + phosphate = alpha-D-ribose 1-phosphate + guanine. It carries out the reaction inosine + phosphate = alpha-D-ribose 1-phosphate + hypoxanthine. The catalysed reaction is thymidine + phosphate = 2-deoxy-alpha-D-ribose 1-phosphate + thymine. It catalyses the reaction uridine + phosphate = alpha-D-ribose 1-phosphate + uracil. The enzyme catalyses xanthosine + phosphate = alpha-D-ribose 1-phosphate + xanthine. Functionally, catalyzes the phosphorolysis of diverse nucleosides, yielding D-ribose 1-phosphate and the respective free bases. Can use uridine, adenosine, guanosine, cytidine, thymidine, inosine and xanthosine as substrates. Also catalyzes the reverse reactions. The chain is Pyrimidine/purine nucleoside phosphorylase from Acinetobacter baylyi (strain ATCC 33305 / BD413 / ADP1).